Consider the following 1027-residue polypeptide: Kinesin heavy chain isoform 5A (1027 aa).

N-acetylalanine is present on Ala-2. The region spanning 9 to 327 (SIKVLCRFRP…LMFGQRAKTI (319 aa)) is the Kinesin motor domain. 86-93 (GQTSSGKT) lines the ATP pocket. The segment at 174–315 (VSSPEEILDV…PSSYNDAETK (142 aa)) is microtubule-binding. A necessary for interaction with ZFYVE27 region spans residues 271–361 (EGTKSYVPYR…KTKAQKETIA (91 aa)). A coiled-coil region spans residues 331–905 (ASVNLELTAE…EVDRIKEAVR (575 aa)). Positions 353–1027 (TKAQKETIAK…FPLHQETAAS (675 aa)) are interaction with BICD2. Thr-397 is subject to Phosphothreonine. The tract at residues 906–936 (YKSSGKRGHSAQIAKPVRPGHYPASSPTNPY) is disordered. Residues 907–1027 (KSSGKRGHSA…FPLHQETAAS (121 aa)) are globular.

This sequence belongs to the TRAFAC class myosin-kinesin ATPase superfamily. Kinesin family. Kinesin subfamily. As to quaternary structure, oligomer composed of two heavy chains and two light chains. Interacts with GRIP1. Interacts with FMR1 (via C-terminus); this interaction is increased in a mGluR-dependent manner. Interacts with BORCS5. Interacts with ZFYVE27. Interacts with VAPA, VAPB, SURF4, RAB11A (GDP-bound form), RAB11B (GDP-bound form) and RTN3 in a ZFYVE27-dependent manner. Interacts with BICD2. Interacts with DTNB. In terms of tissue distribution, expressed in brain.

The protein localises to the cytoplasm. It localises to the perinuclear region. It is found in the cytoskeleton. The protein resides in the perikaryon. It catalyses the reaction ATP + H2O + a kinesin associated with a microtubule at position (n) = ADP + phosphate a kinesin associated with a microtubule at position (n+1, toward the plus end).. In terms of biological role, microtubule-dependent motor required for slow axonal transport of neurofilament proteins (NFH, NFM and NFL). Can induce formation of neurite-like membrane protrusions in non-neuronal cells in a ZFYVE27-dependent manner. The ZFYVE27-KIF5A complex contributes to the vesicular transport of VAPA, VAPB, SURF4, RAB11A, RAB11B and RTN3 proteins in neurons. Required for anterograde axonal transportation of MAPK8IP3/JIP3 which is essential for MAPK8IP3/JIP3 function in axon elongation. The chain is Kinesin heavy chain isoform 5A from Rattus norvegicus (Rat).